A 1009-amino-acid polypeptide reads, in one-letter code: MLRFIPSSAKARALRRSAVTAYRLNRLTCLSSLQQNRTFATQPTDDFLTGGAADYVDEMYDAWKKDPNSVHASWQAYFKNVQERGVSPSKAFQAPPLLDYADSYTALDSSLINGNNYADIDVGIYMKVQLLVRAYQSRGHHLAKLDPLGINVNHNRPSELTLEHYGFTESDLNRTIHLGPGILPNFREAGRKTMTLREIVETCEKIYCGSFAVEFTHISSRKRSNWILSHLETPTPFRYSHDQKIMIFDRLSWADSFERFLFTKFPNDKRFGLEGCEAMVPGMKALIDRSVDEGISNIVIGMAHRGRLNLLHNIVRKPAQAIFSEFRGTQDPDDEGSGDVKYHLGMNYQRPTPSGKRVSLSLVANPSHLEAEDPVVLGKVRAIQHYTSDEASHEQSMGILIHGDAAFAAQGVVYETFGLHALPGYSTGGTVHIVINNQIGFTTDPRFARSTPYCTDIAKSMEAPIFHVNGDDVEAVTFICQLAADWRKAFKTDVVVDIVCYRRHGHNETDQPSFTQPRMYKAIAKHPPTFKIYTQQLLQEKTVSKAEVDAQEKRVWDILESSFESSKNYKSDHREWLSNPWVGFASPKDLMTKILPSYPTGVNIDTLKQIGKALYTLPEGFDAHRNLKRILNNRNKSISSGEGIDMPTAEALAFGTLLEEGHHVRVSGQDVERGTFSQRHAVLHDQSSENVYIPLNHLSPNQASFVIRNSSLSEYGVLGFEYGYSLSSPNALVVWEAQFGDFANNAQCIIDQFIAAGETKWLQRTGIVLSLPHGYDGQGPEHSSARMERYLQLCNEDPREFPSEEKLQRQHQDCNIQAIYVTKPSQYFHALRRNIHRQFRKPLVIFFSKSLLRHPAARSTIDEFDEKHGFKLILEEEEHGKSILPPEKIEKLIICSGQVWVALSKAREENKIDNIAITRVEQLHPFGWKQMAANISQYPNLKEIIWCQEEPLNAGAWTYMEPRIYTILKHLGRDLPVRYAGRPPSASVAAGNKQQHLAEQEQFLNDALL.

Residues Met1 to Phe39 constitute a mitochondrion transit peptide. Residues Arg305, Asp404, Asn437, Ile439, and Gln669 each contribute to the thiamine diphosphate site. Residues Asp404, Asn437, and Ile439 each coordinate Mg(2+).

The protein belongs to the alpha-ketoglutarate dehydrogenase family. Requires thiamine diphosphate as cofactor. Mg(2+) serves as cofactor.

Its subcellular location is the mitochondrion matrix. It catalyses the reaction N(6)-[(R)-lipoyl]-L-lysyl-[protein] + 2-oxoglutarate + H(+) = N(6)-[(R)-S(8)-succinyldihydrolipoyl]-L-lysyl-[protein] + CO2. Its activity is regulated as follows. Catabolite repressed. The 2-oxoglutarate dehydrogenase complex catalyzes the overall conversion of 2-oxoglutarate to succinyl-CoA and CO(2). It contains multiple copies of three enzymatic components: 2-oxoglutarate dehydrogenase (E1), dihydrolipoamide succinyltransferase (E2) and lipoamide dehydrogenase (E3). The protein is 2-oxoglutarate dehydrogenase, mitochondrial (kgd1) of Schizosaccharomyces pombe (strain 972 / ATCC 24843) (Fission yeast).